The following is a 328-amino-acid chain: DNA-directed RNA polymerase subunit alpha (328 aa).

The alpha N-terminal domain (alpha-NTD) stretch occupies residues 1–234 (MQNSPTEYLK…GQLSVFADLE (234 aa)). An alpha C-terminal domain (alpha-CTD) region spans residues 248–328 (VDPILLRPVD…NWPPAGLEKV (81 aa)).

This sequence belongs to the RNA polymerase alpha chain family. Homodimer. The RNAP catalytic core consists of 2 alpha, 1 beta, 1 beta' and 1 omega subunit. When a sigma factor is associated with the core the holoenzyme is formed, which can initiate transcription.

The catalysed reaction is RNA(n) + a ribonucleoside 5'-triphosphate = RNA(n+1) + diphosphate. In terms of biological role, DNA-dependent RNA polymerase catalyzes the transcription of DNA into RNA using the four ribonucleoside triphosphates as substrates. This chain is DNA-directed RNA polymerase subunit alpha, found in Methylobacillus flagellatus (strain ATCC 51484 / DSM 6875 / VKM B-1610 / KT).